Consider the following 242-residue polypeptide: N-alpha-acetyltransferase 60 (242 aa).

Residues 1–192 (MTEAVPSSAL…GGHPPWTILD (192 aa)) lie on the Cytoplasmic side of the membrane. The N-acetyltransferase domain maps to 13–182 (VSLRLLCHDD…DGFTYVLYIN (170 aa)). Tyr38 contributes to the substrate binding site. Lys79 carries the N6-acetyllysine; by autocatalysis modification. Residue Tyr97 is part of the active site. Leu99 lines the substrate pocket. 101-103 (LGV) contacts acetyl-CoA. 3 positions are modified to N6-acetyllysine; by autocatalysis: Lys105, Lys109, and Lys121. 109-114 (KHGIGS) is an acetyl-CoA binding site. His138 is an active-site residue. Acetyl-CoA is bound by residues Asn143 and 150-153 (YENR). At Lys156 the chain carries N6-acetyllysine; by autocatalysis. Positions 162–173 (PYYYSIRGVLKD) are required for homodimerization. Tyr165 contacts substrate. An intramembrane region (helical) is located at residues 193 to 236 (YIQHLGSALANLSPCSIPHRIYRQAQSLLCSFLPWSSISTKGGI). The Cytoplasmic portion of the chain corresponds to 237–242 (EYSRTM).

It belongs to the acetyltransferase family. NAA60 subfamily. Monomer and homodimer; monomer in presence of substrate and homodimer in its absence. Post-translationally, acetylated: autoacetylation is required for optimal acetyltransferase activity.

It is found in the golgi apparatus membrane. The enzyme catalyses N-terminal L-methionyl-[transmembrane protein] + acetyl-CoA = N-terminal N(alpha)-acetyl-L-methionyl-[transmembrane protein] + CoA + H(+). The catalysed reaction is L-lysyl-[protein] + acetyl-CoA = N(6)-acetyl-L-lysyl-[protein] + CoA + H(+). N-alpha-acetyltransferase that specifically mediates the acetylation of N-terminal residues of the transmembrane proteins, with a strong preference for N-termini facing the cytosol. Displays N-terminal acetyltransferase activity towards a range of N-terminal sequences including those starting with Met-Lys, Met-Val, Met-Ala and Met-Met. Required for normal chromosomal segregation during anaphase. May also show histone acetyltransferase activity; such results are however unclear in vivo and would require additional experimental evidences. This is N-alpha-acetyltransferase 60 (NAA60) from Bos taurus (Bovine).